We begin with the raw amino-acid sequence, 637 residues long: 1-deoxy-D-xylulose-5-phosphate synthase (637 aa).

Thiamine diphosphate is bound by residues His76 and 117–119 (AHS). Position 148 (Asp148) interacts with Mg(2+). Residues 149-150 (GA), Asn177, Tyr287, and Glu369 contribute to the thiamine diphosphate site. Asn177 serves as a coordination point for Mg(2+).

Belongs to the transketolase family. DXPS subfamily. Homodimer. Requires Mg(2+) as cofactor. The cofactor is thiamine diphosphate.

The catalysed reaction is D-glyceraldehyde 3-phosphate + pyruvate + H(+) = 1-deoxy-D-xylulose 5-phosphate + CO2. The protein operates within metabolic intermediate biosynthesis; 1-deoxy-D-xylulose 5-phosphate biosynthesis; 1-deoxy-D-xylulose 5-phosphate from D-glyceraldehyde 3-phosphate and pyruvate: step 1/1. In terms of biological role, catalyzes the acyloin condensation reaction between C atoms 2 and 3 of pyruvate and glyceraldehyde 3-phosphate to yield 1-deoxy-D-xylulose-5-phosphate (DXP). The polypeptide is 1-deoxy-D-xylulose-5-phosphate synthase (Pelagibacter ubique (strain HTCC1062)).